A 439-amino-acid polypeptide reads, in one-letter code: Damage-control phosphatase ARMT1 (439 aa).

Ala-2 carries the post-translational modification N-acetylalanine. At Ser-4 the chain carries Phosphoserine. Lys-40 is modified (N6-acetyllysine). Mn(2+) contacts are provided by Asp-251 and Asn-252. 251–252 (DN) serves as a coordination point for substrate. S-adenosyl-L-methionine is bound by residues Glu-256 and Asp-289. Asp-289 lines the Mn(2+) pocket. Residues 365–369 (DLNYR) and Lys-402 contribute to the substrate site. Residues 399–402 (RTLK) carry the Subfamily III RTxK motif motif.

This sequence belongs to the damage-control phosphatase family. Sugar phosphate phosphatase III subfamily. Requires Mn(2+) as cofactor. The cofactor is Ni(2+). Automethylated.

The catalysed reaction is beta-D-fructose 1-phosphate + H2O = D-fructose + phosphate. It catalyses the reaction beta-D-fructose 6-phosphate = dihydroxyacetone + D-glyceraldehyde 3-phosphate. The enzyme catalyses L-glutamyl-[protein] + S-adenosyl-L-methionine = [protein]-L-glutamate 5-O-methyl ester + S-adenosyl-L-homocysteine. Its function is as follows. Metal-dependent phosphatase that shows phosphatase activity against several substrates, including fructose-1-phosphate and fructose-6-phosphate. Its preference for fructose-1-phosphate, a strong glycating agent that causes DNA damage rather than a canonical yeast metabolite, suggests a damage-control function in hexose phosphate metabolism. Has also been shown to have O-methyltransferase activity that methylates glutamate residues of target proteins to form gamma-glutamyl methyl ester residues. Possibly methylates PCNA, suggesting it is involved in the DNA damage response. The chain is Damage-control phosphatase ARMT1 from Mus musculus (Mouse).